A 388-amino-acid polypeptide reads, in one-letter code: Succinate--CoA ligase [ADP-forming] subunit beta (388 aa).

ATP-binding positions include Lys-46, 53–55, Glu-99, Cys-102, and Glu-107; that span reads GRG. Mg(2+) contacts are provided by Asn-199 and Asp-213. Substrate is bound by residues Asn-264 and 321–323; that span reads GIV.

It belongs to the succinate/malate CoA ligase beta subunit family. As to quaternary structure, heterotetramer of two alpha and two beta subunits. Mg(2+) is required as a cofactor.

It carries out the reaction succinate + ATP + CoA = succinyl-CoA + ADP + phosphate. It catalyses the reaction GTP + succinate + CoA = succinyl-CoA + GDP + phosphate. Its pathway is carbohydrate metabolism; tricarboxylic acid cycle; succinate from succinyl-CoA (ligase route): step 1/1. Functionally, succinyl-CoA synthetase functions in the citric acid cycle (TCA), coupling the hydrolysis of succinyl-CoA to the synthesis of either ATP or GTP and thus represents the only step of substrate-level phosphorylation in the TCA. The beta subunit provides nucleotide specificity of the enzyme and binds the substrate succinate, while the binding sites for coenzyme A and phosphate are found in the alpha subunit. This Actinobacillus pleuropneumoniae serotype 7 (strain AP76) protein is Succinate--CoA ligase [ADP-forming] subunit beta.